A 292-amino-acid chain; its full sequence is Sulfofructosephosphate aldolase (292 aa).

The active-site Schiff-base intermediate with substrate is the K193.

This sequence belongs to the aldolase LacD family. Homotetramer.

The enzyme catalyses 6-deoxy-6-sulfo-D-fructose 1-phosphate = (2S)-3-sulfolactaldehyde + dihydroxyacetone phosphate. Functionally, cleaves 6-deoxy-6-sulfo-D-fructose 1-phosphate (SFP) to form dihydroxyacetone phosphate (DHAP) and 3-sulfolactaldehyde (SLA). The sequence is that of Sulfofructosephosphate aldolase (yihT) from Escherichia coli O157:H7.